A 134-amino-acid chain; its full sequence is MPDTLELEVATPERELVREQVTEVQVPAAQGYLGVLPGHAPLLGLLGIGTLTYMVGGNKRHISVHGGFLEVLEDHVRVLADVAERAEEIDIQRAKAALERSQREALNPALGVDPAEALAATMRAEARLATADKK.

It belongs to the ATPase epsilon chain family. In terms of assembly, F-type ATPases have 2 components, CF(1) - the catalytic core - and CF(0) - the membrane proton channel. CF(1) has five subunits: alpha(3), beta(3), gamma(1), delta(1), epsilon(1). CF(0) has three main subunits: a, b and c.

Its subcellular location is the cell inner membrane. Its function is as follows. Produces ATP from ADP in the presence of a proton gradient across the membrane. The chain is ATP synthase epsilon chain from Solibacter usitatus (strain Ellin6076).